We begin with the raw amino-acid sequence, 67 residues long: uncharacterized protein (67 aa).

The first 28 residues, 1-28 (MSHVSVIAARLLVWVGILLCLGVPQLWA), serve as a signal peptide directing secretion. Residue N39 is glycosylated (N-linked (GlcNAc...) asparagine; by host).

This is an uncharacterized protein from Invertebrate iridescent virus 3 (IIV-3).